Here is a 202-residue protein sequence, read N- to C-terminus: 3-isopropylmalate dehydratase small subunit (202 aa).

This sequence belongs to the LeuD family. LeuD type 1 subfamily. In terms of assembly, heterodimer of LeuC and LeuD.

The catalysed reaction is (2R,3S)-3-isopropylmalate = (2S)-2-isopropylmalate. It functions in the pathway amino-acid biosynthesis; L-leucine biosynthesis; L-leucine from 3-methyl-2-oxobutanoate: step 2/4. Its function is as follows. Catalyzes the isomerization between 2-isopropylmalate and 3-isopropylmalate, via the formation of 2-isopropylmaleate. This Rhizobium rhizogenes (strain K84 / ATCC BAA-868) (Agrobacterium radiobacter) protein is 3-isopropylmalate dehydratase small subunit.